The following is a 986-amino-acid chain: Ephrin type-A receptor 4 (986 aa).

The signal sequence occupies residues 1-19 (MAGVPVGALLPLLVGVCGA). At 20-547 (VTGSRVYPAN…PIIGDGTNPT (528 aa)) the chain is on the extracellular side. The region spanning 30–209 (EVTLLDSRSV…FYKKCPLTVR (180 aa)) is the Eph LBD domain. N-linked (GlcNAc...) asparagine glycans are attached at residues Asn-235, Asn-340, and Asn-408. Fibronectin type-III domains follow at residues 328 to 439 (PPSA…TNQA) and 440 to 537 (APSP…TVPS). A helical transmembrane segment spans residues 548–569 (VLLVSVAGSVVLVVILIAAFVI). Residues 570–986 (SRRRSKYSKA…QQMHGRMVPV (417 aa)) lie on the Cytoplasmic side of the membrane. Tyr-596 and Tyr-602 each carry phosphotyrosine; by autocatalysis. Residues 621-882 (IKIEKVIGVG…QIVNMLDKLI (262 aa)) form the Protein kinase domain. ATP is bound by residues 627 to 635 (IGVGEFGEV) and Lys-653. Asp-746 serves as the catalytic Proton acceptor. A phosphotyrosine; by autocatalysis mark is found at Tyr-779 and Tyr-928. The SAM domain maps to 911-975 (SAVVSVSDWL…LSSVQAMRSQ (65 aa)). The short motif at 984-986 (VPV) is the PDZ-binding element.

It belongs to the protein kinase superfamily. Tyr protein kinase family. Ephrin receptor subfamily. In terms of assembly, interacts with the src family kinase, p59-Fyn, through the major phosphorylation site at position Tyr-602. Interacts (via PDZ motif) with SIPA1L1 (via PDZ domain); controls neuronal morphology through regulation of the RAP1 (RAP1A or RAP1B) and RAP2 (RAP2A, RAP2B or RAP2C) GTPases. As to expression, expressed at high levels in brain, with expression also detected in the kidney, lung, muscle and thymus.

Its subcellular location is the cell membrane. It is found in the early endosome. The enzyme catalyses L-tyrosyl-[protein] + ATP = O-phospho-L-tyrosyl-[protein] + ADP + H(+). Receptor tyrosine kinase which binds membrane-bound ephrin family ligands residing on adjacent cells, leading to contact-dependent bidirectional signaling into neighboring cells. The signaling pathway downstream of the receptor is referred to as forward signaling while the signaling pathway downstream of the ephrin ligand is referred to as reverse signaling. Highly promiscuous, it has the unique property among Eph receptors to bind and to be physiologically activated by both GPI-anchored ephrin-A and transmembrane ephrin-B ligands including EFNA1 and EFNB3. Upon activation by ephrin ligands, modulates cell morphology and integrin-dependent cell adhesion through regulation of the Rac, Rap and Rho GTPases activity. Plays an important role in the development of the nervous system controlling different steps of axonal guidance including the establishment of the corticospinal projections. This chain is Ephrin type-A receptor 4 (EPHA4), found in Gallus gallus (Chicken).